Here is a 424-residue protein sequence, read N- to C-terminus: Histidine--tRNA ligase (424 aa).

This sequence belongs to the class-II aminoacyl-tRNA synthetase family. Homodimer.

It localises to the cytoplasm. It catalyses the reaction tRNA(His) + L-histidine + ATP = L-histidyl-tRNA(His) + AMP + diphosphate + H(+). The polypeptide is Histidine--tRNA ligase (Desulfitobacterium hafniense (strain DSM 10664 / DCB-2)).